Consider the following 59-residue polypeptide: UPF0337 protein PP_4561 (59 aa).

Residues 27-43 (TDNEKLRAEGKAQELKG) show a composition bias toward basic and acidic residues. The tract at residues 27-59 (TDNEKLRAEGKAQELKGEAQQVKGNVKDAVKKP) is disordered.

This sequence belongs to the UPF0337 (CsbD) family.

In Pseudomonas putida (strain ATCC 47054 / DSM 6125 / CFBP 8728 / NCIMB 11950 / KT2440), this protein is UPF0337 protein PP_4561.